A 319-amino-acid polypeptide reads, in one-letter code: Cobalamin biosynthesis protein CbiB (319 aa).

Transmembrane regions (helical) follow at residues 56–76, 82–102, 153–173, 204–224, and 296–316; these read VMWV…LALA, WFGW…RSLA, VDGI…LAMA, VANY…AGLC, and LMWV…CGLS.

This sequence belongs to the CobD/CbiB family.

It localises to the cell membrane. It participates in cofactor biosynthesis; adenosylcobalamin biosynthesis. In terms of biological role, converts cobyric acid to cobinamide by the addition of aminopropanol on the F carboxylic group. However, the true cosubstrate could be (R)-1-amino-2-propanol O-2-phosphate, leading to cobinamide phosphate. The polypeptide is Cobalamin biosynthesis protein CbiB (Salmonella choleraesuis (strain SC-B67)).